Consider the following 115-residue polypeptide: U17-barytoxin-Tl1c (115 aa).

The first 20 residues, 1–20, serve as a signal peptide directing secretion; that stretch reads MKTIIVFLSLLVLATKFGDA. The propeptide occupies 21 to 74; that stretch reads KEGVNQKQKKEVTQNEFREEYLNEMAAMSLVQQLEAIERALFENEAGRNSRQKR. Intrachain disulfides connect Cys75–Cys89, Cys82–Cys94, and Cys88–Cys109.

This sequence belongs to the neurotoxin 14 (magi-1) family. 03 (ICK-30-40) subfamily. Expressed by the venom gland.

It is found in the secreted. Functionally, ion channel inhibitor. The protein is U17-barytoxin-Tl1c of Trittame loki (Brush-footed trapdoor spider).